The following is a 330-amino-acid chain: DNA-binding death effector domain-containing protein 2 (330 aa).

A DED domain is found at 25-104 (SLHRMFEVVG…RHDLLPHLAR (80 aa)). Residues 104–109 (RKRRRP) carry the Nuclear localization signal motif. A disordered region spans residues 104–195 (RKRRRPVSPE…HQELGRPSSE (92 aa)). Residues 137–147 (ASSSSDSPQSQ) show a composition bias toward low complexity. A Bipartite nuclear localization signal motif is present at residues 156 to 174 (KRQRRSRGRPSSGARQRRR).

Interacts with CASP8, CASP10 and GTF3C3. Homodimerizes and heterodimerizes with DEDD. As to expression, expression is high in liver, heart, kidney, and testis but low in brain, spleen, lung, and skeleton muscle.

It localises to the nucleus. The protein resides in the nucleolus. In terms of biological role, may play a critical role in death receptor-induced apoptosis and may target CASP8 and CASP10 to the nucleus. May regulate degradation of intermediate filaments during apoptosis. May play a role in the general transcription machinery in the nucleus and might be an important regulator of the activity of GTF3C3. This chain is DNA-binding death effector domain-containing protein 2 (Dedd2), found in Mus musculus (Mouse).